Consider the following 424-residue polypeptide: Neurotensin receptor type 1 (424 aa).

At 1–67 the chain is on the extracellular side; the sequence is MHLNSSVQQG…TDIYSKVLVT (67 aa). Residues N4, N38, and N42 are each glycosylated (N-linked (GlcNAc...) asparagine). A helical membrane pass occupies residues 68 to 88; it reads AVYLALFVVGTVGNSVTAFTL. Residues 89–102 lie on the Cytoplasmic side of the membrane; the sequence is ARKKSLQSLQSTVH. Residues 103–122 form a helical membrane-spanning segment; sequence YHLGSLALSDLLILLLAMPV. Topologically, residues 123–142 are extracellular; that stretch reads ELYNFIWVHHPWAFGDAGCR. A disulfide bond links C141 and C224. Residues 143–164 traverse the membrane as a helical segment; that stretch reads GYYFLRDACTYATALNVASLSV. The Cytoplasmic portion of the chain corresponds to 165–184; the sequence is ERYLAICHPFKAKTLMSRSR. Residues 185-205 traverse the membrane as a helical segment; it reads TKKFISAIWLASALLAVPMLF. The Extracellular segment spans residues 206 to 234; the sequence is TMGLQNRSADGQHPGGLVCTPTVDTATVK. N211 is a glycosylation site (N-linked (GlcNAc...) asparagine). Residues 235 to 259 traverse the membrane as a helical segment; it reads VVIQVNTFMSFLFPMLIISILNTVI. Topologically, residues 260–308 are cytoplasmic; the sequence is ANKLTVMVHQAAEQGRGVCTVGTHNSLEHSTFNMSIEPGRVQALRHGVL. Residues 309–330 traverse the membrane as a helical segment; sequence VLRAVVIAFVVCWLPYHVRRLM. The interval 326-349 is neurotensin binding; sequence VRRLMFCYISDEQWTTFLFDFYHY. Residues 331 to 348 lie on the Extracellular side of the membrane; the sequence is FCYISDEQWTTFLFDFYH. Residues 349–369 traverse the membrane as a helical segment; sequence YFYMLTNALFYVSSAINPILY. Topologically, residues 370–424 are cytoplasmic; the sequence is NLVSANFRQVFLSTLACLCPGWRRRRKKRPTFSRKPNSMSSNHAFSTSATRETLY. S-palmitoyl cysteine attachment occurs at residues C386 and C388. The disordered stretch occupies residues 398–424; the sequence is RPTFSRKPNSMSSNHAFSTSATRETLY. Positions 403–424 are enriched in polar residues; that stretch reads RKPNSMSSNHAFSTSATRETLY.

The protein belongs to the G-protein coupled receptor 1 family. Neurotensin receptor subfamily. NTSR1 sub-subfamily. Interacts (palmitoylated form) with GNA11. N-glycosylated. Post-translationally, palmitoylated; this is required for normal localization at membrane rafts and normal GNA11-mediated activation of down-stream signaling cascades. The palmitoylation level increases in response to neurotensin treatment.

The protein localises to the cell membrane. It is found in the membrane raft. Functionally, G-protein coupled receptor for the tridecapeptide neurotensin (NTS). Signaling is effected via G proteins that activate a phosphatidylinositol-calcium second messenger system. Signaling leads to the activation of downstream MAP kinases and protects cells against apoptosis. The chain is Neurotensin receptor type 1 (Ntsr1) from Mus musculus (Mouse).